Consider the following 649-residue polypeptide: MIKITFPDGAVREFEIGTTTSEIAESISKSLAKKALAGKFNGQLIDTTRAITQDGSIEIVTPDHEDALDILRHSAAHLFAQAARRLFPDIHLGVGPAIQDGFYYDTDNEAGQISNEDLPRIEEEMKKIVKENFPSVREEVTKDEAREIFKNDPYKLELIEEHSEDAGGLTIYRQGEYVDLCRGPHVPSTGRIQVFHLLNVAGAYWRGDSNNAMMQRIYGTAWFDKKDLKSYLKRLEEAKERDHRKLGKELDLFMISQEVGQGLPFWLPDGATIRRIIERYITDKEVASGYQHVYTPPIASVDLYKTSGHWDHYREDMFPTMDMGDGESFVLRPMNCPHHIEVYKNHVHSYRELPIRIAELGMMHRYEKSGALSGLQRVREMTLNDGHTFVALDQVEDEFKRTLQLIIDVYEDFNLTDYSFRLSYRDPNDTHKYFDDDEMWEKSQTMLKAAMDDMGLDYYEAEGEAAFYGPKLDIQVKTALGNDETLSTIQLDFLLPERFELTYIGADGEEHRPVMIHRGIVSTMERFTAYLIETYKGAFPTWLAPHQVTVIPISNEAHIDYAWEVAKELRDHGIRADVDDRNEKMQYKIRQSQTKKVPYQLIVGDKEVENGTVNVRRYGSKQTHTESIAEFRENILADIKRKSRPDNAK.

Residues 1–61 (MIKITFPDGA…TQDGSIEIVT (61 aa)) enclose the TGS domain. Residues 242–540 (DHRKLGKELD…LIETYKGAFP (299 aa)) are catalytic. 3 residues coordinate Zn(2+): Cys-336, His-387, and His-517.

This sequence belongs to the class-II aminoacyl-tRNA synthetase family. Homodimer. Zn(2+) is required as a cofactor.

It is found in the cytoplasm. The enzyme catalyses tRNA(Thr) + L-threonine + ATP = L-threonyl-tRNA(Thr) + AMP + diphosphate + H(+). In terms of biological role, catalyzes the attachment of threonine to tRNA(Thr) in a two-step reaction: L-threonine is first activated by ATP to form Thr-AMP and then transferred to the acceptor end of tRNA(Thr). Also edits incorrectly charged L-seryl-tRNA(Thr). The chain is Threonine--tRNA ligase from Streptococcus mutans serotype c (strain ATCC 700610 / UA159).